A 251-amino-acid polypeptide reads, in one-letter code: Probable transcriptional regulatory protein Mflv_3828 (251 aa).

The protein belongs to the TACO1 family.

The protein localises to the cytoplasm. The chain is Probable transcriptional regulatory protein Mflv_3828 from Mycolicibacterium gilvum (strain PYR-GCK) (Mycobacterium gilvum (strain PYR-GCK)).